The chain runs to 94 residues: Co-chaperonin GroES (94 aa).

Belongs to the GroES chaperonin family. As to quaternary structure, heptamer of 7 subunits arranged in a ring. Interacts with the chaperonin GroEL.

It is found in the cytoplasm. Functionally, together with the chaperonin GroEL, plays an essential role in assisting protein folding. The GroEL-GroES system forms a nano-cage that allows encapsulation of the non-native substrate proteins and provides a physical environment optimized to promote and accelerate protein folding. GroES binds to the apical surface of the GroEL ring, thereby capping the opening of the GroEL channel. In Streptococcus pneumoniae (strain Taiwan19F-14), this protein is Co-chaperonin GroES.